Reading from the N-terminus, the 202-residue chain is Recombination protein RecR (202 aa).

Residues 61–76 form a C4-type zinc finger; the sequence is CARCNSFTEDEVCATC. Positions 84 to 179 constitute a Toprim domain; the sequence is GLLCIVETPA…KVTRLARGVP (96 aa).

This sequence belongs to the RecR family.

Functionally, may play a role in DNA repair. It seems to be involved in an RecBC-independent recombinational process of DNA repair. It may act with RecF and RecO. This chain is Recombination protein RecR, found in Bordetella pertussis (strain Tohama I / ATCC BAA-589 / NCTC 13251).